An 835-amino-acid chain; its full sequence is Lon protease (835 aa).

The region spanning 36–234 (VHVFPLLRRP…KALILLKKEL (199 aa)) is the Lon N-terminal domain. 387 to 394 (GPPGVGKT) is a binding site for ATP. A Lon proteolytic domain is found at 646 to 828 (RTPVGVCMGL…DQVFKISFPN (183 aa)). Catalysis depends on residues Ser-734 and Lys-777.

This sequence belongs to the peptidase S16 family. Homohexamer. Organized in a ring with a central cavity.

The protein localises to the cytoplasm. It catalyses the reaction Hydrolysis of proteins in presence of ATP.. Functionally, ATP-dependent serine protease that mediates the selective degradation of mutant and abnormal proteins as well as certain short-lived regulatory proteins. Required for cellular homeostasis and for survival from DNA damage and developmental changes induced by stress. Degrades polypeptides processively to yield small peptide fragments that are 5 to 10 amino acids long. Binds to DNA in a double-stranded, site-specific manner. The sequence is that of Lon protease from Protochlamydia amoebophila (strain UWE25).